Reading from the N-terminus, the 171-residue chain is NADH-quinone oxidoreductase subunit I 1 (171 aa).

4Fe-4S ferredoxin-type domains lie at 39 to 71 and 81 to 110; these read IVLT…LSKA and EHFR…LTPD. 8 residues coordinate [4Fe-4S] cluster: Cys51, Cys54, Cys57, Cys61, Cys90, Cys93, Cys96, and Cys100.

The protein belongs to the complex I 23 kDa subunit family. In terms of assembly, NDH-1 is composed of 14 different subunits. Subunits NuoA, H, J, K, L, M, N constitute the membrane sector of the complex. It depends on [4Fe-4S] cluster as a cofactor.

It is found in the cell inner membrane. The catalysed reaction is a quinone + NADH + 5 H(+)(in) = a quinol + NAD(+) + 4 H(+)(out). NDH-1 shuttles electrons from NADH, via FMN and iron-sulfur (Fe-S) centers, to quinones in the respiratory chain. The immediate electron acceptor for the enzyme in this species is believed to be ubiquinone. Couples the redox reaction to proton translocation (for every two electrons transferred, four hydrogen ions are translocated across the cytoplasmic membrane), and thus conserves the redox energy in a proton gradient. The polypeptide is NADH-quinone oxidoreductase subunit I 1 (Rhodopseudomonas palustris (strain HaA2)).